Reading from the N-terminus, the 249-residue chain is Aspartate/glutamate leucyltransferase (249 aa).

Belongs to the R-transferase family. Bpt subfamily.

It localises to the cytoplasm. The catalysed reaction is N-terminal L-glutamyl-[protein] + L-leucyl-tRNA(Leu) = N-terminal L-leucyl-L-glutamyl-[protein] + tRNA(Leu) + H(+). It catalyses the reaction N-terminal L-aspartyl-[protein] + L-leucyl-tRNA(Leu) = N-terminal L-leucyl-L-aspartyl-[protein] + tRNA(Leu) + H(+). In terms of biological role, functions in the N-end rule pathway of protein degradation where it conjugates Leu from its aminoacyl-tRNA to the N-termini of proteins containing an N-terminal aspartate or glutamate. In Brucella anthropi (strain ATCC 49188 / DSM 6882 / CCUG 24695 / JCM 21032 / LMG 3331 / NBRC 15819 / NCTC 12168 / Alc 37) (Ochrobactrum anthropi), this protein is Aspartate/glutamate leucyltransferase.